We begin with the raw amino-acid sequence, 1249 residues long: MVEAAPPGPGPLRRTFLVPEIKSLDQYDFSRAKAAASLAWVLRAAFGGAEHVPPELWEPFYTDQYAQEHVKPPVTRLLLSAELYCRAWRQALPQLETPPNPSALLALLARRGTVPALPERPVREADLRHQPILMGAHLAVIDALMAAFAFEWTKTLPGPLALTSLEHKLLFWVDTTVRRLQEKTEQEAAQRASPAAPADGAAPAQPSIRYRKDRVVARRAPCFPTVTSLQDLASGAALAATIHCYCPQLLRLEEVCLKDPMSVADSLYNLQLVQDFCASRLPRGCPLSLEDLLYVPPPLKVNLVVMLAELFMCFEVLKPDFVQVKDLPDGHAASPRGTEASPPQNNSGSSSPVFTFRHPLLSSGGPQSPLRGSTGSLKSSPSMSHMEALGKAWNRQLSRPLSQAVSFSTPFGLDSDVDVVMGDPVLLRSVSSDSLGPPRPAPARTPTQPPPEPGDLPTIEEALQIIHSAEPRLLPDGAADGSFYLHSPEGPSKPSLASPYLPEGTSKPLSDRPTKAPVYMPHPETPSKPSPCLVGEASKPPAPSEGSPKAVASSPAATNSEVKMTSFAERKKQLVKAEAEAGAGSPTSTPAPPEALSSEMSELSARLEEKRRAIEAQKRRIEAIFAKHRQRLGKSAFLQVQPREASGEAEAEAEEADSGPVPGGERPAGEGQGEPTSRPKAVTFSPDLGPVPHEGLGEYNRAVSKLSAALSSLQRDMQRLTDQQQRLLAPPEAPGSAPPPAAWVIPGPTTGPKAASPSPARRVPATRRSPGPGPSQSPRSPKHTRPAELRLAPLTRVLTPPHDVDSLPHLRKFSPSQVPVQTRSSILLAEETPPEEPAARPGLIEIPLGSLADPAAEDEGDGSPAGAEDSLEEEASSEGEPRVGLGFFYKDEDKPEDEMAQKRASLLERQQRRAEEARRRKQWQEVEKEQRREEAARLAQEEAPGPAPLVSAVPMATPAPAARAPAEEEVGPRKGDFTRQEYERRAQLKLMDDLDKVLRPRAAGSGGPGRGGRRATRPRSGCCDDSALARSPARGLLGSRLSKIYSQSTLSLSTVANEAHNNLGVKRPTSRAPSPSGLMSPSRLPGSRERDWENGSNASSPASVPEYTGPRLYKEPSAKSNKFIIHNALSHCCLAGKVNEPQKNRILEEIEKSKANHFLILFRDSSCQFRALYTLSGETEELSRLAGYGPRTVTPAMVEGIYKYNSDRKRFTQIPAKTMSMSVDAFTIQGHLWQGKKPTTPKKGGGTPK.

Disordered regions lie at residues lysine 183 to glutamine 205, proline 328 to histidine 385, valine 430 to proline 457, leucine 473 to glutamate 609, leucine 632 to leucine 696, glutamine 714 to alanine 1029, and asparagine 1061 to arginine 1111. Phosphothreonine is present on threonine 184. Residues alanine 189 to glutamine 205 are compositionally biased toward low complexity. Phosphoserine is present on serine 193. The 110-residue stretch at proline 203–methionine 312 folds into the Calponin-homology (CH) domain. Residues serine 334, serine 341, serine 347, serine 351, serine 368, serine 373, and serine 382 each carry the phosphoserine modification. Low complexity predominate over residues serine 341–proline 352. Residues glycine 364 to methionine 383 show a composition bias toward polar residues. Residues proline 437–glycine 454 are compositionally biased toward pro residues. 3 positions are modified to phosphoserine: serine 547, serine 554, and serine 560. Basic and acidic residues predominate over residues alanine 568–alanine 579. The segment covering glutamate 594–serine 604 has biased composition (low complexity). Positions glutamate 594 to histidine 628 form a coiled coil. The segment covering glycine 647–aspartate 657 has biased composition (acidic residues). The residue at position 685 (serine 685) is a Phosphoserine. A coiled-coil region spans residues leucine 696–alanine 729. A compositionally biased stretch (pro residues) spans proline 731–alanine 741. Residues alanine 754 to arginine 779 are compositionally biased toward low complexity. A Phosphoserine modification is found at serine 769. The residue at position 799 (threonine 799) is a Phosphothreonine. Serine 814 carries the post-translational modification Phosphoserine. The span at serine 814–serine 825 shows a compositional bias: polar residues. Basic and acidic residues predominate over residues tyrosine 889–glutamine 940. The stretch at glutamate 896 to alanine 935 forms a coiled coil. The segment covering valine 950–alanine 964 has biased composition (low complexity). Basic and acidic residues predominate over residues valine 970–leucine 998. Residue serine 1074 is modified to Phosphoserine. Residues glycine 1109 to lysine 1243 enclose the CKK domain.

Belongs to the CAMSAP1 family. As to quaternary structure, interacts with PLEKHA7. Interacts with CAMSAP2. Interacts with KATNA1 and KATNB1; leading to regulate the length of CAMSAP3-decorated microtubule stretches. Interacts with AKAP9; regulating Golgi assembly in epithelial cells. Interacts with MACF1. Interacts with AKNA.

It is found in the cytoplasm. It localises to the cytoskeleton. The protein localises to the cell junction. Its subcellular location is the adherens junction. The protein resides in the cilium axoneme. It is found in the cilium basal body. Key microtubule-organizing protein that specifically binds the minus-end of non-centrosomal microtubules and regulates their dynamics and organization. Specifically recognizes growing microtubule minus-ends and autonomously decorates and stabilizes microtubule lattice formed by microtubule minus-end polymerization. Acts on free microtubule minus-ends that are not capped by microtubule-nucleating proteins or other factors and protects microtubule minus-ends from depolymerization. In addition, it also reduces the velocity of microtubule polymerization. Required for the biogenesis and the maintenance of zonula adherens by anchoring the minus-end of microtubules to zonula adherens and by recruiting the kinesin KIFC3 to those junctional sites. Required for orienting the apical-to-basal polarity of microtubules in epithelial cells: acts by tethering non-centrosomal microtubules to the apical cortex, leading to their longitudinal orientation. Plays a key role in early embryos, which lack centrosomes: accumulates at the microtubule bridges that connect pairs of cells and enables the formation of a non-centrosomal microtubule-organizing center that directs intracellular transport in the early embryo. Couples non-centrosomal microtubules with actin: interaction with MACF1 at the minus ends of non-centrosomal microtubules, tethers the microtubules to actin filaments, regulating focal adhesion size and cell migration. Plays a key role in the generation of non-centrosomal microtubules by accumulating in the pericentrosomal region and cooperating with KATNA1 to release non-centrosomal microtubules from the centrosome. Through the microtubule cytoskeleton, also regulates the organization of cellular organelles including the Golgi and the early endosomes. Through interaction with AKAP9, involved in translocation of Golgi vesicles in epithelial cells, where microtubules are mainly non-centrosomal. Plays an important role in motile cilia function by facilitatating proper orientation of basal bodies and formation of central microtubule pairs in motile cilia. This chain is Calmodulin-regulated spectrin-associated protein 3, found in Homo sapiens (Human).